Here is a 1537-residue protein sequence, read N- to C-terminus: Dicer-like protein 1 (1537 aa).

The segment at Ser38–Asp68 is disordered. A Helicase ATP-binding domain is found at Leu133 to Leu314. Position 146–153 (Leu146–Thr153) interacts with ATP. Residues Asp259–His262 carry the DEAH box motif. A Helicase C-terminal domain is found at Glu459–His618. Positions Ala651 to Ala741 constitute a Dicer dsRNA-binding fold domain. The PAZ domain occupies Asp891 to Ala1019. 2 consecutive RNase III domains span residues Ile1043 to Gly1202 and Ala1253 to Lys1405. Mg(2+) contacts are provided by Glu1294, Asp1391, and Glu1394. The DRBM domain occupies Thr1439–Gly1507. 4 residues coordinate Zn(2+): Cys1451, His1478, Cys1519, and Cys1521.

It belongs to the helicase family. Dicer subfamily. Requires Mg(2+) as cofactor. Mn(2+) serves as cofactor.

Dicer-like endonuclease involved in cleaving double-stranded RNA in the RNA interference (RNAi) pathway. Produces 21 to 25 bp dsRNAs (siRNAs) which target the selective destruction of homologous RNAs leading to sequence-specific suppression of gene expression, called post-transcriptional gene silencing (PTGS). Part of a broad host defense response against viral infection and transposons. The chain is Dicer-like protein 1 (dcl1) from Aspergillus fumigatus (strain ATCC MYA-4609 / CBS 101355 / FGSC A1100 / Af293) (Neosartorya fumigata).